A 166-amino-acid chain; its full sequence is PTS system glucose-specific EIIA component (166 aa).

Positions 34-138 (DPVFAQKMMG…SVISPIIITN (105 aa)) constitute a PTS EIIA type-1 domain. Zn(2+) is bound by residues His-71 and His-86. His-86 serves as the catalytic Tele-phosphohistidine intermediate; for EIIA activity. His-86 carries the phosphohistidine; by HPr modification.

Heterodimer with glycerol kinase (glpk). Zn(2+) serves as cofactor.

The protein resides in the cytoplasm. The phosphoenolpyruvate-dependent sugar phosphotransferase system (sugar PTS), a major carbohydrate active transport system, catalyzes the phosphorylation of incoming sugar substrates concomitantly with their translocation across the cell membrane. The enzyme II complex composed of PtsG and Crr is involved in glucose transport. This Staphylococcus aureus (strain MRSA252) protein is PTS system glucose-specific EIIA component (crr).